Here is a 480-residue protein sequence, read N- to C-terminus: Altronate oxidoreductase (480 aa).

19–30 contacts NAD(+); it reads ILQFGEGNFLRG.

It belongs to the mannitol dehydrogenase family. UxaB subfamily.

The enzyme catalyses D-altronate + NAD(+) = keto-D-tagaturonate + NADH + H(+). The protein operates within carbohydrate metabolism; pentose and glucuronate interconversion. This chain is Altronate oxidoreductase, found in Bacillus subtilis (strain 168).